A 333-amino-acid chain; its full sequence is Probable G-protein coupled receptor 33 (333 aa).

Residues 1–30 (MDLINSTDYLINASTLVRNSTQFLAPASKM) lie on the Extracellular side of the membrane. Residues asparagine 5, asparagine 12, and asparagine 19 are each glycosylated (N-linked (GlcNAc...) asparagine). A helical membrane pass occupies residues 31–53 (IIALSLYISSIIGTITNGLYLWV). Residues 54 to 64 (LRFKMKQTVNT) are Cytoplasmic-facing. A helical membrane pass occupies residues 65 to 86 (LLFFHLILSYFISTMILPFMAT). Over 87–103 (SQLQDNHWNFGTALCKV) the chain is Extracellular. Cysteine 101 and cysteine 179 are joined by a disulfide. A helical transmembrane segment spans residues 104–124 (FNGTLSLGMFTSVFFLSAIGL). Residues 125-143 (DRYLLTLHPVWSQQHRTPR) are Cytoplasmic-facing. Residues 144–165 (WASSIVLGVWISAAALSIPYLI) form a helical membrane-spanning segment. Topologically, residues 166-209 (FRQTHHDRKGKVTCQNNYAVSTNWESKEMQALRQWIHVACFISR) are extracellular. A helical membrane pass occupies residues 210-230 (FLLGFLLPFFIIIFCYERVAS). The Cytoplasmic segment spans residues 231-246 (KVKERSLFKSSKPFKV). Residues 247-268 (MMTAIISFFVCWMPYHIHQGLL) traverse the membrane as a helical segment. At 269 to 283 (LTMNQSLLLELTLIL) the chain is on the extracellular side. N-linked (GlcNAc...) asparagine glycosylation is present at asparagine 272. A helical membrane pass occupies residues 284 to 303 (TVLTTSFNTIFSPTLYLFVG). At 304-333 (ENFKKVFKKSILALFESTFSEDSSVERTQT) the chain is on the cytoplasmic side.

Belongs to the G-protein coupled receptor 1 family.

It is found in the cell membrane. Its function is as follows. Orphan receptor; could be a chemoattractant receptor. The chain is Probable G-protein coupled receptor 33 (GPR33) from Pan paniscus (Pygmy chimpanzee).